Here is a 365-residue protein sequence, read N- to C-terminus: tRNA N6-adenosine threonylcarbamoyltransferase (365 aa).

The Fe cation site is built by H119 and H123. Residues 141–145 (LVSGG), D174, and G187 contribute to the substrate site. A disordered region spans residues 184 to 203 (QPGGPSVEGEARQGDPKRFR). Residues 192-201 (GEARQGDPKR) show a composition bias toward basic and acidic residues. N289 contributes to the substrate binding site. D317 contacts Fe cation. The tract at residues 342–365 (ARPRWPLDQSSPAMLGSGKKGAKA) is disordered.

This sequence belongs to the KAE1 / TsaD family. It depends on Fe(2+) as a cofactor.

It localises to the cytoplasm. The enzyme catalyses L-threonylcarbamoyladenylate + adenosine(37) in tRNA = N(6)-L-threonylcarbamoyladenosine(37) in tRNA + AMP + H(+). Required for the formation of a threonylcarbamoyl group on adenosine at position 37 (t(6)A37) in tRNAs that read codons beginning with adenine. Is involved in the transfer of the threonylcarbamoyl moiety of threonylcarbamoyl-AMP (TC-AMP) to the N6 group of A37, together with TsaE and TsaB. TsaD likely plays a direct catalytic role in this reaction. The protein is tRNA N6-adenosine threonylcarbamoyltransferase of Ruegeria pomeroyi (strain ATCC 700808 / DSM 15171 / DSS-3) (Silicibacter pomeroyi).